The primary structure comprises 689 residues: Glycine--tRNA ligase beta subunit (689 aa).

Belongs to the class-II aminoacyl-tRNA synthetase family. As to quaternary structure, tetramer of two alpha and two beta subunits.

Its subcellular location is the cytoplasm. It carries out the reaction tRNA(Gly) + glycine + ATP = glycyl-tRNA(Gly) + AMP + diphosphate. The protein is Glycine--tRNA ligase beta subunit of Klebsiella pneumoniae subsp. pneumoniae (strain ATCC 700721 / MGH 78578).